A 586-amino-acid polypeptide reads, in one-letter code: A-type ATP synthase subunit A (586 aa).

An ATP-binding site is contributed by 233–240; the sequence is GPFGSGKT.

This sequence belongs to the ATPase alpha/beta chains family. Has multiple subunits with at least A(3), B(3), C, D, E, F, H, I and proteolipid K(x).

Its subcellular location is the cell membrane. It catalyses the reaction ATP + H2O + 4 H(+)(in) = ADP + phosphate + 5 H(+)(out). Component of the A-type ATP synthase that produces ATP from ADP in the presence of a proton gradient across the membrane. The A chain is the catalytic subunit. This is A-type ATP synthase subunit A from Methanococcus aeolicus (strain ATCC BAA-1280 / DSM 17508 / OCM 812 / Nankai-3).